A 425-amino-acid polypeptide reads, in one-letter code: Serine--tRNA ligase (425 aa).

Residue 230 to 232 (TAE) participates in L-serine binding. 261-263 (RSE) lines the ATP pocket. An L-serine-binding site is contributed by E284. 348–351 (EISS) provides a ligand contact to ATP. S384 serves as a coordination point for L-serine.

It belongs to the class-II aminoacyl-tRNA synthetase family. Type-1 seryl-tRNA synthetase subfamily. In terms of assembly, homodimer. The tRNA molecule binds across the dimer.

Its subcellular location is the cytoplasm. It carries out the reaction tRNA(Ser) + L-serine + ATP = L-seryl-tRNA(Ser) + AMP + diphosphate + H(+). The catalysed reaction is tRNA(Sec) + L-serine + ATP = L-seryl-tRNA(Sec) + AMP + diphosphate + H(+). It participates in aminoacyl-tRNA biosynthesis; selenocysteinyl-tRNA(Sec) biosynthesis; L-seryl-tRNA(Sec) from L-serine and tRNA(Sec): step 1/1. Its function is as follows. Catalyzes the attachment of serine to tRNA(Ser). Is also able to aminoacylate tRNA(Sec) with serine, to form the misacylated tRNA L-seryl-tRNA(Sec), which will be further converted into selenocysteinyl-tRNA(Sec). The chain is Serine--tRNA ligase from Streptococcus gordonii (strain Challis / ATCC 35105 / BCRC 15272 / CH1 / DL1 / V288).